The following is a 461-amino-acid chain: Piperine synthase (461 aa).

Catalysis depends on proton acceptor residues H168 and D387. The Microbody targeting signal motif lies at 459-461 (SRM).

This sequence belongs to the plant acyltransferase family. In terms of assembly, monomer. As to expression, confined to immature fruits perisperm. Also detectable in roots.

The protein localises to the cytoplasm. The catalysed reaction is piperidine + (E,E)-piperoyl-CoA = piperine + CoA + H(+). It carries out the reaction pyrrolidine + (E,E)-piperoyl-CoA = piperyline + CoA + H(+). It catalyses the reaction (E,E)-piperoyl-CoA + 2-methylpropan-1-amine = (E,E)-piperlonguminine + CoA + H(+). The protein operates within aromatic compound metabolism. Involved in the biosynthesis of aromatic piperamides natural products such as piperine (1-piperoyl-piperidine), the pungent principle contributing, together with several terpenoids, to the aromatic properties of black pepper fruits, and displaying numerous pharmacological activities such as antiproliferative, antitumor, antiangiogenesis, antioxidant, antidiabetic, antiobesity, cardioprotective, antimicrobial, antiaging, and immunomodulatory effects. Mediates mainly the conversion of piperidine and piperoyl-CoA to piperine. Can also use pyrrolidine and isobutylamine as acceptors and 3,4-methylenedioxycinnamoyl-CoA as an alternative CoA-donor with a lower efficiency. The polypeptide is Piperine synthase (Piper nigrum (Black pepper)).